Reading from the N-terminus, the 250-residue chain is Lymphotoxin-beta (250 aa).

Residues 1 to 26 (MGAPGLETRAGGPNGKSYLLLASVGA) lie on the Cytoplasmic side of the membrane. Residues 27 to 47 (AVLGTLLLSVPITVLTVLALM) traverse the membrane as a helical; Signal-anchor for type II membrane protein segment. Topologically, residues 48-250 (PQEQGGQVAD…KTFFGAVMVG (203 aa)) are extracellular. The region spanning 87-249 (PAAHLIGIAK…GKTFFGAVMV (163 aa)) is the THD domain. A glycan (N-linked (GlcNAc...) asparagine) is linked at asparagine 228.

The protein belongs to the tumor necrosis factor family. As to quaternary structure, heterotrimer of either two LTB and one LTA subunits or (less prevalent) two LTA and one LTB subunits.

The protein resides in the membrane. In terms of biological role, cytokine that binds to LTBR/TNFRSF3. May play a specific role in immune response regulation. Provides the membrane anchor for the attachment of the heterotrimeric complex to the cell surface. This Notamacropus eugenii (Tammar wallaby) protein is Lymphotoxin-beta (LTB).